Here is a 108-residue protein sequence, read N- to C-terminus: Movement protein TGB2 (108 aa).

The Cytoplasmic portion of the chain corresponds to 1 to 8; it reads MPLTPPPD. A helical transmembrane segment spans residues 9-29; sequence YTKPFIAVVVGGTLAAFVLLL. Over 30–71 the chain is Lumenal; the sequence is TRNTLPHTGDNLHSLPHGGTYCDGTKRIRYGGPHRSHVPELP. A helical membrane pass occupies residues 72–92; that stretch reads AKSWALITVVAILIALHFSCL. Over 93 to 108 the chain is Cytoplasmic; sequence RTHRVHRCVLCHTTSG.

It belongs to the Tymovirales TGBp2 protein family.

It is found in the host endoplasmic reticulum membrane. Functionally, plays a role in viral cell-to-cell propagation, by facilitating genome transport to neighboring plant cells through plasmosdesmata,. This chain is Movement protein TGB2, found in Lily virus X.